A 479-amino-acid polypeptide reads, in one-letter code: MDGTLLVGRSSFPYFALVAFEVGGIFRLLFLVLASPLAGLLYYFISESAGIRVLIFATFAGMKVSDIESVARAVLPKFYSSDLHPETWHVFSSCGKRCVLTANPRIMVEGFLKEYLGADMVIGTEISMYKGRATGFVNKPGILVGDNKAMALKKAFCSTSTPDIGLGDRKTDFPFMNLCKESYIVRPDPGVKPMSQDKLPKPIVFHDGRLVQKPSPLMALMIILWIPVGFLLACLRIAAGALLPMPLVYYAFWALGVRVKVKGNPPPPAKKSTDQTGVLFICSHRTLLDPIFLSTSLGRPIPAVTYSVSRLSEIISPIKTVRLSRDRVTDANMIKKMLEEGDLVICPEGTTCREPFLLRFSALFAELTDELVPVAMSNKMSMFHGTTARGWKGMDPFYFFMNPSPTYEVTFLNKLPYDLTCKAGKSSHDVANYIQRTIAATLSYECTNFTRKDKYKALAGNDGTVTTKPGLAAKKVMGC.

Helical transmembrane passes span 14–34, 37–57, 215–235, and 237–257; these read YFAL…LVLA, LAGL…LIFA, SPLM…LACL, and IAAG…ALGV. The short motif at 284–289 is the HXXXXD motif element; it reads HRTLLD. Asparagine 448 is a glycosylation site (N-linked (GlcNAc...) asparagine).

This sequence belongs to the GPAT/DAPAT family.

Its subcellular location is the membrane. It carries out the reaction sn-glycerol 3-phosphate + an acyl-CoA = a 1-acyl-sn-glycero-3-phosphate + CoA. It participates in lipid metabolism; glycerolipid metabolism. Functionally, involved in the production of cutin monomers. Esterifies acyl-group from acyl-ACP to the sn-2 position of glycerol-3-phosphate, a step in cutin biosynthesis. Required for colonization of the root by mycorrhizal fungi, and appropriate hyphopodia and arbuscule formation. Cutin monomers act as plant signals that promote colonization by arbuscular mycorrhizal fungi. This signaling function has been recruited by pathogenic oomycetes to facilitate appressoria formation and their own invasion. In Petunia hybrida (Petunia), this protein is Glycerol-3-phosphate acyltransferase RAM2.